Consider the following 422-residue polypeptide: Gamma-glutamyl phosphate reductase (422 aa).

This sequence belongs to the gamma-glutamyl phosphate reductase family.

The protein localises to the cytoplasm. The enzyme catalyses L-glutamate 5-semialdehyde + phosphate + NADP(+) = L-glutamyl 5-phosphate + NADPH + H(+). It participates in amino-acid biosynthesis; L-proline biosynthesis; L-glutamate 5-semialdehyde from L-glutamate: step 2/2. Functionally, catalyzes the NADPH-dependent reduction of L-glutamate 5-phosphate into L-glutamate 5-semialdehyde and phosphate. The product spontaneously undergoes cyclization to form 1-pyrroline-5-carboxylate. In Chloroflexus aggregans (strain MD-66 / DSM 9485), this protein is Gamma-glutamyl phosphate reductase.